The sequence spans 400 residues: Tyrosine-specific transport system 1 (400 aa).

A run of 12 helical transmembrane segments spans residues 5-25 (VGSTLLVAGTMIGAGMLAMPL), 34-54 (FTLVLLLGLWALLTFSALLFV), 80-100 (IIATAVLIIFLYALIAAYISG), 117-137 (VSVLLFTVIFGSFIVIGTHSV), 143-163 (VLFFVMLAAFAVVLSLMLPEI), 176-196 (ALIISASPVFFTAFGFHGSIP), 211-231 (FSILVGSAITLCAYILWQLST), 250-270 (LNGLVKATFAITGSNVIASAV), 273-293 (FSTLALITSFLGVGLGLLECI), 313-333 (LTFIPPLVFALFYPEGFILAL), 335-355 (YAGQMFAFYAVVLPVSLVWKA), and 370-390 (NLTLIIVLVLGVLITSIPFAI).

Belongs to the amino acid/polyamine transporter 2 family. Mtr/TnaB/TyrP permease subfamily.

It localises to the cell inner membrane. The enzyme catalyses L-tyrosine(in) + H(+)(in) = L-tyrosine(out) + H(+)(out). Its function is as follows. Transports tyrosine across the cytoplasmic membrane. The transport system is energized by the proton motive force. The sequence is that of Tyrosine-specific transport system 1 (tyrP-A) from Haemophilus influenzae (strain ATCC 51907 / DSM 11121 / KW20 / Rd).